The chain runs to 506 residues: Maturase K (506 aa).

Belongs to the intron maturase 2 family. MatK subfamily.

The protein resides in the plastid. Its subcellular location is the chloroplast. Its function is as follows. Usually encoded in the trnK tRNA gene intron. Probably assists in splicing its own and other chloroplast group II introns. In Arctostaphylos uva-ursi (Bearberry), this protein is Maturase K.